Consider the following 244-residue polypeptide: Phosphoadenosine 5'-phosphosulfate reductase (244 aa).

The active-site Nucleophile; cysteine thiosulfonate intermediate is Cys239.

This sequence belongs to the PAPS reductase family. CysH subfamily.

The protein localises to the cytoplasm. It carries out the reaction [thioredoxin]-disulfide + sulfite + adenosine 3',5'-bisphosphate + 2 H(+) = [thioredoxin]-dithiol + 3'-phosphoadenylyl sulfate. The protein operates within sulfur metabolism; hydrogen sulfide biosynthesis; sulfite from sulfate: step 3/3. In terms of biological role, catalyzes the formation of sulfite from phosphoadenosine 5'-phosphosulfate (PAPS) using thioredoxin as an electron donor. In Escherichia coli O81 (strain ED1a), this protein is Phosphoadenosine 5'-phosphosulfate reductase.